Reading from the N-terminus, the 141-residue chain is Regulator of ribonuclease activity B (141 aa).

Residues 119–132 show a composition bias toward acidic residues; that stretch reads DEDFDDEDDDEDYD. A disordered region spans residues 119–141; it reads DEDFDDEDDDEDYDKDGFPIERH.

Belongs to the RraB family. Interacts with the C-terminal region of Rne.

The protein localises to the cytoplasm. Its function is as follows. Globally modulates RNA abundance by binding to RNase E (Rne) and regulating its endonucleolytic activity. Can modulate Rne action in a substrate-dependent manner by altering the composition of the degradosome. The sequence is that of Regulator of ribonuclease activity B from Shewanella amazonensis (strain ATCC BAA-1098 / SB2B).